A 56-amino-acid polypeptide reads, in one-letter code: MTDFDGRLTEGTVNLVQDPNGGGWSAHCAEPGCDWADFAGPLGFQGLVAIARRHTH.

This is an uncharacterized protein from Streptomyces lividans.